A 309-amino-acid polypeptide reads, in one-letter code: Homoserine kinase (309 aa).

An ATP-binding site is contributed by 91 to 101 (PIGSGLGSSAC).

Belongs to the GHMP kinase family. Homoserine kinase subfamily.

Its subcellular location is the cytoplasm. The enzyme catalyses L-homoserine + ATP = O-phospho-L-homoserine + ADP + H(+). Its pathway is amino-acid biosynthesis; L-threonine biosynthesis; L-threonine from L-aspartate: step 4/5. Functionally, catalyzes the ATP-dependent phosphorylation of L-homoserine to L-homoserine phosphate. This is Homoserine kinase (thrB) from Serratia marcescens.